The sequence spans 1588 residues: Pentafunctional AROM polypeptide (1588 aa).

The 3-dehydroquinate synthase stretch occupies residues 1–392 (MVQLAKVPIL…YGDSAQFVSD (392 aa)). NAD(+) is bound by residues 43-45 (DTN), 78-81 (ETSK), 109-111 (GGV), and Asp-114. Arg-125 provides a ligand contact to 7-phospho-2-dehydro-3-deoxy-D-arabino-heptonate. 134 to 135 (TS) lines the NAD(+) pocket. Residues Asp-141 and Lys-147 each coordinate 7-phospho-2-dehydro-3-deoxy-D-arabino-heptonate. Lys-156 serves as a coordination point for NAD(+). Asn-157 provides a ligand contact to 7-phospho-2-dehydro-3-deoxy-D-arabino-heptonate. Residues 174 to 177 (WLET) and Asn-185 each bind NAD(+). Residue Glu-189 participates in Zn(2+) binding. 7-phospho-2-dehydro-3-deoxy-D-arabino-heptonate-binding positions include 189–192 (EVIK) and Lys-258. The Proton acceptor; for 3-dehydroquinate synthase activity role is filled by Glu-268. 7-phospho-2-dehydro-3-deoxy-D-arabino-heptonate-binding positions include 272–276 (RNLLN) and His-279. His-279 lines the Zn(2+) pocket. The Proton acceptor; for 3-dehydroquinate synthase activity role is filled by His-283. His-295 and Lys-364 together coordinate 7-phospho-2-dehydro-3-deoxy-D-arabino-heptonate. His-295 lines the Zn(2+) pocket. Residues 405–871 (VYPFKDIPAD…WDVLHSELGA (467 aa)) form an EPSP synthase region. Residue Cys-853 is the For EPSP synthase activity of the active site. A shikimate kinase region spans residues 890–1080 (SVVIIGMRAA…IPSGRSAFVC (191 aa)). ATP is bound at residue 895 to 902 (GMRAAGKT). Residues 1081–1293 (LTFDDLTEQT…AAPGQLTVAQ (213 aa)) are 3-dehydroquinase. The active-site Proton acceptor; for 3-dehydroquinate dehydratase activity is His-1198. The active-site Schiff-base intermediate with substrate; for 3-dehydroquinate dehydratase activity is Lys-1227. Residues 1306-1588 (PKELFVVGKP…KAIFDAVTKE (283 aa)) form a shikimate dehydrogenase region.

In the N-terminal section; belongs to the sugar phosphate cyclases superfamily. Dehydroquinate synthase family. This sequence in the 2nd section; belongs to the EPSP synthase family. It in the 3rd section; belongs to the shikimate kinase family. The protein in the 4th section; belongs to the type-I 3-dehydroquinase family. In the C-terminal section; belongs to the shikimate dehydrogenase family. As to quaternary structure, homodimer. Requires Zn(2+) as cofactor.

It is found in the cytoplasm. It carries out the reaction 7-phospho-2-dehydro-3-deoxy-D-arabino-heptonate = 3-dehydroquinate + phosphate. The catalysed reaction is 3-dehydroquinate = 3-dehydroshikimate + H2O. It catalyses the reaction shikimate + NADP(+) = 3-dehydroshikimate + NADPH + H(+). The enzyme catalyses shikimate + ATP = 3-phosphoshikimate + ADP + H(+). It carries out the reaction 3-phosphoshikimate + phosphoenolpyruvate = 5-O-(1-carboxyvinyl)-3-phosphoshikimate + phosphate. It participates in metabolic intermediate biosynthesis; chorismate biosynthesis; chorismate from D-erythrose 4-phosphate and phosphoenolpyruvate: step 2/7. Its pathway is metabolic intermediate biosynthesis; chorismate biosynthesis; chorismate from D-erythrose 4-phosphate and phosphoenolpyruvate: step 3/7. It functions in the pathway metabolic intermediate biosynthesis; chorismate biosynthesis; chorismate from D-erythrose 4-phosphate and phosphoenolpyruvate: step 4/7. The protein operates within metabolic intermediate biosynthesis; chorismate biosynthesis; chorismate from D-erythrose 4-phosphate and phosphoenolpyruvate: step 5/7. It participates in metabolic intermediate biosynthesis; chorismate biosynthesis; chorismate from D-erythrose 4-phosphate and phosphoenolpyruvate: step 6/7. Functionally, the AROM polypeptide catalyzes 5 consecutive enzymatic reactions in prechorismate polyaromatic amino acid biosynthesis. This is Pentafunctional AROM polypeptide from Saccharomyces cerevisiae (strain ATCC 204508 / S288c) (Baker's yeast).